A 192-amino-acid polypeptide reads, in one-letter code: Cytochrome b-245 light chain (192 aa).

Over 2-7 (GQIEWA) the chain is Cytoplasmic. Residues 8 to 30 (MWANEQALASGLILMTGGIVATA) traverse the membrane as a helical segment. Residues 31–35 (GQFTQ) lie on the Extracellular side of the membrane. The helical transmembrane segment at 36–53 (WYLGTYSIAAGVLVCLLE) threads the bilayer. The Cytoplasmic portion of the chain corresponds to 54-69 (YPRGRRTKGSTMERCE). The stretch at 70–80 (QKYMTKVVKAF) is an intramembrane region. At 81–86 (GPLSRN) the chain is on the cytoplasmic side. Residues 87–104 (YYIRAFLHLGLSVPAGFL) form a helical membrane-spanning segment. Residue Leu105 is a topological domain, extracellular. Residues 106-126 (ATILGTACLAIASGIYLLAAI) form a helical membrane-spanning segment. Over 127–192 (RGEQWTPIEP…TPCPVTDEVV (66 aa)) the chain is Cytoplasmic. A disordered region spans residues 134-192 (IEPKPKERPQVGGTIKQPPSNPPPRPPPEARKKPGEEAVAGVPRGAPRKTPCPVTDEVV). A Phosphothreonine modification is found at Thr147. A Glycyl lysine isopeptide (Lys-Gly) (interchain with G-Cter in ubiquitin) cross-link involves residue Lys149.

It belongs to the p22phox family. As to quaternary structure, component of the phagocyte NADPH oxidase core complex/cytochrome b558 complex, composed of CYBB (heavy chain (beta)) and CYBA (light chain (alpha)). Component of the phagocyte NADPH oxidase complex composed of an obligatory core heterodimer formed by the membrane proteins CYBA and CYBB and the cytosolic regulatory subunits NCF1/p47-phox, NCF2/p67-phox, NCF4/p40-phox and the small GTPase RAC1 or RAC2. Interacts with NCF1 (via SH3 domain). Interacts with SH3PXD2A. Interacts with DUOX1, DUOX2 and TPO. Interacts with NOX4; this interaction mediates superoxide generation. Interacts with calprotectin (S100A8/9). Interacts with GBP7. Interacts with NOXO1. Forms a heterodimer with NOX3 and is essential for activity and cell membrane localization of NOX3. Interacts with NOX1. Phosphorylation at Thr-147 enhances NADPH oxidase activity by promoting NCF1/p47-phox binding. Post-translationally, ubiquitinated at Lys-149 likely by RNF145.

It is found in the cell membrane. Its function is as follows. Subunit of NADPH oxidase complexes that is required for the NADPH oxidase activity that generates, in various cell types, superoxide from molecular oxygen utilizing NADPH as an electron donor. Subunit of the phagocyte NADPH oxidase complex that mediates the transfer of electrons from cytosolic NADPH to O2 to produce the superoxide anion (O2(-)). In the activated complex, electrons are first transferred from NADPH to flavin adenine dinucleotide (FAD) and subsequently transferred via two heme molecules to molecular oxygen, producing superoxide through an outer-sphere reaction. Activation of the NADPH oxidase complex is initiated by the assembly of cytosolic subunits of the NADPH oxidase complex with the core NADPH oxidase complex to form a complex at the plasma membrane or phagosomal membrane. This activation process is initiated by phosphorylation dependent binding of the cytosolic NCF1/p47-phox subunit to the C-terminus of CYBA/p22-phox. Aassociates with NOX3 to form a functional NADPH oxidase constitutively generating superoxide. This Sus scrofa (Pig) protein is Cytochrome b-245 light chain.